Reading from the N-terminus, the 136-residue chain is Riboflavin kinase (136 aa).

Position 15–20 (15–20 (GLGEGR)) interacts with CDP. Mg(2+) is bound by residues threonine 44 and asparagine 46. FMN contacts are provided by threonine 103 and glutamate 111. 116–119 (YYLR) contributes to the CDP binding site.

It belongs to the archaeal riboflavin kinase family. Requires Mg(2+) as cofactor.

It catalyses the reaction riboflavin + CTP = CDP + FMN + H(+). The protein operates within cofactor biosynthesis; FMN biosynthesis; FMN from riboflavin (CTP route): step 1/1. In terms of biological role, catalyzes the CTP-dependent phosphorylation of riboflavin (vitamin B2) to form flavin mononucleotide (FMN). This is Riboflavin kinase from Sulfurisphaera tokodaii (strain DSM 16993 / JCM 10545 / NBRC 100140 / 7) (Sulfolobus tokodaii).